The sequence spans 125 residues: Small ribosomal subunit protein uS13 (125 aa).

It belongs to the universal ribosomal protein uS13 family. As to quaternary structure, part of the 30S ribosomal subunit. Forms a loose heterodimer with protein S19. Forms two bridges to the 50S subunit in the 70S ribosome.

In terms of biological role, located at the top of the head of the 30S subunit, it contacts several helices of the 16S rRNA. In the 70S ribosome it contacts the 23S rRNA (bridge B1a) and protein L5 of the 50S subunit (bridge B1b), connecting the 2 subunits; these bridges are implicated in subunit movement. Contacts the tRNAs in the A and P-sites. This is Small ribosomal subunit protein uS13 from Orientia tsutsugamushi (strain Boryong) (Rickettsia tsutsugamushi).